The following is a 121-amino-acid chain: MVNAVNVANVNSVPGLLDVPKINAVVTDNFRAKMVSNTDMIELAANKEAASFEQTILKAFDSMNAKQTNMDKLGEQMIVDPESVDVHDITMGMAEASLSLKLAQTIIDRLVKTWNDITTTR.

Belongs to the FliE family.

The protein resides in the bacterial flagellum basal body. This is Flagellar hook-basal body complex protein FliE from Treponema denticola (strain ATCC 35405 / DSM 14222 / CIP 103919 / JCM 8153 / KCTC 15104).